We begin with the raw amino-acid sequence, 301 residues long: Formylmethanofuran--tetrahydromethanopterin formyltransferase (301 aa).

The protein belongs to the FTR family. In terms of assembly, homotetramer.

It localises to the cytoplasm. The enzyme catalyses N-formylmethanofuran + 5,6,7,8-tetrahydromethanopterin + H(+) = N(5)-formyl-5,6,7,8-tetrahydromethanopterin + methanofuran. It participates in one-carbon metabolism; methanogenesis from CO(2); 5,10-methenyl-5,6,7,8-tetrahydromethanopterin from CO(2): step 2/3. Functionally, catalyzes the reversible transfer of a formyl group from formylmethanofuran (formyl-MFR) to tetrahydromethanopterin (H(4)MPT) to produce 5-formyl tetrahydromethanopterin (5-formyl-H(4)MPT) and methanofuran (MFR). In Methanocaldococcus jannaschii (strain ATCC 43067 / DSM 2661 / JAL-1 / JCM 10045 / NBRC 100440) (Methanococcus jannaschii), this protein is Formylmethanofuran--tetrahydromethanopterin formyltransferase.